The primary structure comprises 265 residues: 5'-nucleotidase SurE (265 aa).

The a divalent metal cation site is built by Asp8, Asp9, Ser39, and Asn96.

This sequence belongs to the SurE nucleotidase family. A divalent metal cation serves as cofactor.

Its subcellular location is the cytoplasm. The enzyme catalyses a ribonucleoside 5'-phosphate + H2O = a ribonucleoside + phosphate. Functionally, nucleotidase that shows phosphatase activity on nucleoside 5'-monophosphates. The chain is 5'-nucleotidase SurE from Dehalococcoides mccartyi (strain CBDB1).